The chain runs to 221 residues: Ras-related protein RABA5a (221 aa).

21 to 28 provides a ligand contact to GTP; it reads GDSAVGKS. The Effector region motif lies at 43–51; that stretch reads SKSTIGVEF. Residues 69–73, 127–130, and 157–158 each bind GTP; these read DTAGQ, NKSD, and SA. S-geranylgeranyl cysteine attachment occurs at residues cysteine 218 and cysteine 219.

Belongs to the small GTPase superfamily. Rab family.

It localises to the cell membrane. Functionally, intracellular vesicle trafficking and protein transport. This chain is Ras-related protein RABA5a (RABA5A), found in Arabidopsis thaliana (Mouse-ear cress).